Here is a 271-residue protein sequence, read N- to C-terminus: D-methionine-binding lipoprotein MetQ (271 aa).

The first 22 residues, 1-22 (MAFKFKTFAAVGALIGSLALAG), serve as a signal peptide directing secretion. The N-palmitoyl cysteine moiety is linked to residue Cys23. The S-diacylglycerol cysteine moiety is linked to residue Cys23.

Belongs to the NlpA lipoprotein family.

The protein resides in the cell membrane. This protein is a component of a D-methionine permease, a binding protein-dependent, ATP-driven transport system. This chain is D-methionine-binding lipoprotein MetQ (metQ), found in Salmonella typhi.